The following is a 217-amino-acid chain: Elongation factor Ts (217 aa).

Residues 82–85 are involved in Mg(2+) ion dislocation from EF-Tu; that stretch reads TDFV.

This sequence belongs to the EF-Ts family.

It localises to the cytoplasm. In terms of biological role, associates with the EF-Tu.GDP complex and induces the exchange of GDP to GTP. It remains bound to the aminoacyl-tRNA.EF-Tu.GTP complex up to the GTP hydrolysis stage on the ribosome. In Prochlorococcus marinus (strain SARG / CCMP1375 / SS120), this protein is Elongation factor Ts.